A 939-amino-acid polypeptide reads, in one-letter code: UvrABC system protein A (939 aa).

Gly-32–Ser-39 is an ATP binding site. Residues Cys-252 to Cys-279 form a C4-type zinc finger. 2 consecutive ABC transporter domains span residues Trp-309–Ile-588 and Ala-608–Lys-936. ATP is bound at residue Gly-640–Ser-647. A C4-type zinc finger spans residues Cys-739–Cys-765.

This sequence belongs to the ABC transporter superfamily. UvrA family. In terms of assembly, forms a heterotetramer with UvrB during the search for lesions.

Its subcellular location is the cytoplasm. The UvrABC repair system catalyzes the recognition and processing of DNA lesions. UvrA is an ATPase and a DNA-binding protein. A damage recognition complex composed of 2 UvrA and 2 UvrB subunits scans DNA for abnormalities. When the presence of a lesion has been verified by UvrB, the UvrA molecules dissociate. This chain is UvrABC system protein A, found in Clostridium acetobutylicum (strain ATCC 824 / DSM 792 / JCM 1419 / IAM 19013 / LMG 5710 / NBRC 13948 / NRRL B-527 / VKM B-1787 / 2291 / W).